The following is a 159-amino-acid chain: Major latex protein 146 (159 aa).

The protein belongs to the MLP family. Laticifer.

Its subcellular location is the vacuole. The protein localises to the cytoplasmic vesicle. Functionally, not known; MLPs constitute up to 50% of the soluble latex protein. The chain is Major latex protein 146 (MLP146) from Papaver somniferum (Opium poppy).